The following is a 113-amino-acid chain: MAALWLQAFSLLVLMMVSWPGSQAVGGPQHLCGSHLVDALYLVCGDRGFFYNPRRDVDPLLGFLPPKAGGAVVQGGENEVTFKDQMEMMVKRGIVEECCHKPCTIFDLQNYCN.

The signal sequence occupies residues methionine 1–alanine 24. 3 disulfide bridges follow: cysteine 32–cysteine 99, cysteine 44–cysteine 112, and cysteine 98–cysteine 103. Positions aspartate 56–valine 90 are cleaved as a propeptide — c peptide.

This sequence belongs to the insulin family. As to quaternary structure, heterodimer of a B chain and an A chain linked by two disulfide bonds.

The protein resides in the secreted. Its function is as follows. Insulin decreases blood glucose concentration. It increases cell permeability to monosaccharides, amino acids and fatty acids. It accelerates glycolysis, the pentose phosphate cycle, and glycogen synthesis in liver. In Oreochromis niloticus (Nile tilapia), this protein is Insulin (ins).